Here is a 252-residue protein sequence, read N- to C-terminus: Trans-aconitate 2-methyltransferase (252 aa).

It belongs to the methyltransferase superfamily. Tam family.

Its subcellular location is the cytoplasm. It carries out the reaction trans-aconitate + S-adenosyl-L-methionine = (E)-3-(methoxycarbonyl)pent-2-enedioate + S-adenosyl-L-homocysteine. In terms of biological role, catalyzes the S-adenosylmethionine monomethyl esterification of trans-aconitate. In Escherichia coli O7:K1 (strain IAI39 / ExPEC), this protein is Trans-aconitate 2-methyltransferase.